A 238-amino-acid chain; its full sequence is tRNA (guanine-N(7)-)-methyltransferase (238 aa).

The S-adenosyl-L-methionine site is built by Glu68, Glu93, Asp120, and Asp143. Asp143 is an active-site residue. Residues Lys147, Asp179, and 216 to 219 (TKFE) contribute to the substrate site.

The protein belongs to the class I-like SAM-binding methyltransferase superfamily. TrmB family.

The enzyme catalyses guanosine(46) in tRNA + S-adenosyl-L-methionine = N(7)-methylguanosine(46) in tRNA + S-adenosyl-L-homocysteine. It functions in the pathway tRNA modification; N(7)-methylguanine-tRNA biosynthesis. Its function is as follows. Catalyzes the formation of N(7)-methylguanine at position 46 (m7G46) in tRNA. The polypeptide is tRNA (guanine-N(7)-)-methyltransferase (Ectopseudomonas mendocina (strain ymp) (Pseudomonas mendocina)).